A 132-amino-acid polypeptide reads, in one-letter code: Small ribosomal subunit protein uS8c (132 aa).

It belongs to the universal ribosomal protein uS8 family. Part of the 30S ribosomal subunit.

It localises to the plastid. It is found in the chloroplast. Functionally, one of the primary rRNA binding proteins, it binds directly to 16S rRNA central domain where it helps coordinate assembly of the platform of the 30S subunit. This Gracilaria tenuistipitata var. liui (Red alga) protein is Small ribosomal subunit protein uS8c (rps8).